The sequence spans 529 residues: Cytochrome P450 monooxygenase fsoB (529 aa).

A helical membrane pass occupies residues 4-24; the sequence is WLLSLLIAGVVFAIFQLRTVG. Residue Cys436 coordinates heme.

This sequence belongs to the cytochrome P450 family. Requires heme as cofactor.

The protein localises to the membrane. In terms of biological role, cytochrome P450 monooxygenase; part of the gene cluster that mediates the biosynthesis of the enfumafungin-type antibiotic fuscoatroside. Four enzymes are sufficient to produce fuscoatroside: the terpene cyclase-glycosyl transferase fusion protein fsoAthe cytochrome P450 monoxygenases fsoD and fsoE, and the acetyltransferase fsoF; the cytochrome P450 monooxygenase fsoB and the glucose oxidase-like protein fsoC do not seem to play a role in biosynthesis of fuscoatroside. This is Cytochrome P450 monooxygenase fsoB from Humicola fuscoatra.